We begin with the raw amino-acid sequence, 105 residues long: RxLR effector protein PITG_18670 (105 aa).

The signal sequence occupies residues 1 to 21 (MRSIFYFALAFAALTCSNASA). Residues 39–57 (RSLRVAGQEVARGDRGEEI) carry the RxLR-dEER motif.

This sequence belongs to the RxLR effector family.

The protein resides in the secreted. It is found in the host nucleus. It localises to the host nucleolus. The protein localises to the host cytoplasm. Effector that enhances P.infestans colonization of Nicotiana benthamiana leaves. This Phytophthora infestans (strain T30-4) (Potato late blight agent) protein is RxLR effector protein PITG_18670.